The sequence spans 775 residues: Protein STRUBBELIG-RECEPTOR FAMILY 1 (775 aa).

An N-terminal signal peptide occupies residues 1–31 (MRSMRSGRDNNICFLGFLSFALISLPSLSLA). The Extracellular segment spans residues 32–314 (LTNPDDVAAI…GKEDSFTSKR (283 aa)). 6 LRR repeats span residues 101-122 (SLKA…TLPV), 123-146 (SLQN…SSLK), 147-169 (SLSV…FQDL), 171-193 (LMIN…MQNL), 195-217 (TLTS…QDLP), and 218-238 (LKDL…KLLS). N133 is a glycosylation site (N-linked (GlcNAc...) asparagine). N181 and N192 each carry an N-linked (GlcNAc...) asparagine glycan. Residue N250 is glycosylated (N-linked (GlcNAc...) asparagine). The interval 254-308 (APSPSPETPPSPTSPKRPFFGPPSPNASAGHGQAHVRSPPSDHHPSRPTPQGKED) is disordered. The span at 256 to 278 (SPSPETPPSPTSPKRPFFGPPSP) shows a compositional bias: pro residues. N-linked (GlcNAc...) asparagine glycosylation occurs at N279. The helical transmembrane segment at 315 to 335 (IIWISILGAFSFVVLALVCLL) threads the bilayer. Residues 336–775 (CGRKCLRKRE…NGDNQYTGRR (440 aa)) are Cytoplasmic-facing. Positions 345–414 (EDSEQLSKPH…VGSESKQESH (70 aa)) are disordered. The span at 367 to 379 (RSNASMLPPSNTF) shows a compositional bias: polar residues. Positions 380-391 (NKDKEARPKERV) are enriched in basic and acidic residues. The region spanning 478–756 (FSHENLIGTG…EVVQDLSDMI (279 aa)) is the Protein kinase domain.

It belongs to the protein kinase superfamily. Ser/Thr protein kinase family. In terms of tissue distribution, expressed in roots, stems, leaves and flowers. Low expression in seedlings and siliques.

Its subcellular location is the membrane. Not essential for epidermal patterning and not redundant with STRUBBELIG. The protein is Protein STRUBBELIG-RECEPTOR FAMILY 1 (SRF1) of Arabidopsis thaliana (Mouse-ear cress).